The chain runs to 156 residues: Interleukin-36 receptor antagonist protein (156 aa).

Cys-9 and Cys-155 form a disulfide bridge.

The protein belongs to the IL-1 family. In terms of assembly, interacts with cargo receptor TMED10; the interaction mediates the translocation from the cytoplasm into the ERGIC (endoplasmic reticulum-Golgi intermediate compartment) and thereby secretion. Post-translationally, removal of N-terminal methionine is necessary for full antagonistic activity. As to expression, highly abundant in embryonic tissue and tissues containing epithelial cells.

Its subcellular location is the cytoplasm. It localises to the secreted. In terms of biological role, inhibits the activity of interleukin-36 (IL36A,IL36B and IL36G) by binding to receptor IL1RL2/IL-36R and preventing its association with the coreceptor IL1RAP for signaling. Part of the IL-36 signaling system that is thought to be present in epithelial barriers and to take part in local inflammatory response; similar to the IL-1 system with which it shares the coreceptor. Proposed to play a role in skin inflammation. May be involved in the innate immune response to fungal pathogens. May activate an anti-inflammatory signaling pathway by recruiting SIGIRR. The protein is Interleukin-36 receptor antagonist protein of Mus musculus (Mouse).